Here is a 346-residue protein sequence, read N- to C-terminus: DNA polymerase IV 2 (346 aa).

The UmuC domain occupies 9 to 191 (ILHVDLDQFL…RTVEALWGVG (183 aa)). 2 residues coordinate Mg(2+): aspartate 13 and aspartate 111. Glutamate 112 is an active-site residue.

The protein belongs to the DNA polymerase type-Y family. Monomer. Mg(2+) serves as cofactor.

The protein resides in the cytoplasm. It catalyses the reaction DNA(n) + a 2'-deoxyribonucleoside 5'-triphosphate = DNA(n+1) + diphosphate. In terms of biological role, poorly processive, error-prone DNA polymerase involved in untargeted mutagenesis. Copies undamaged DNA at stalled replication forks, which arise in vivo from mismatched or misaligned primer ends. These misaligned primers can be extended by PolIV. Exhibits no 3'-5' exonuclease (proofreading) activity. May be involved in translesional synthesis, in conjunction with the beta clamp from PolIII. This is DNA polymerase IV 2 (dinB2) from Mycobacterium bovis (strain ATCC BAA-935 / AF2122/97).